The primary structure comprises 428 residues: Somatostatin receptor type 3 (428 aa).

Topologically, residues 1 to 45 (MAAVTYPSSVPTTLDPGNASSAWPLDTSLGNASAGTSLAGLAVSG) are extracellular. 2 N-linked (GlcNAc...) asparagine glycosylation sites follow: Asn-18 and Asn-31. Residues 46 to 71 (ILISLVYLVVCVVGLLGNSLVIYVVL) traverse the membrane as a helical segment. Residues 72–81 (RHTSSPSVTS) lie on the Cytoplasmic side of the membrane. The helical transmembrane segment at 82-103 (VYILNLALADELFMLGLPFLAA) threads the bilayer. Residues 104 to 118 (QNALSYWPFGSLMCR) lie on the Extracellular side of the membrane. Cys-117 and Cys-192 are joined by a disulfide. A helical transmembrane segment spans residues 119–140 (LVMAVDGINQFTSIFCLTVMSV). Over 141-162 (DRYLAVVHPTRSARWRTAPVAR) the chain is Cytoplasmic. The chain crosses the membrane as a helical span at residues 163-182 (MVSAAVWVASAVVVLPVVVF). Residues 183–206 (SGVPRGMSTCHMQWPEPAAAWRTA) lie on the Extracellular side of the membrane. The chain crosses the membrane as a helical span at residues 207-232 (FIIYTAALGFFGPLLVICLCYLLIVV). Residues 233-266 (KVRSTTRRVRAPSCQWVQAPACQRRRRSERRVTR) lie on the Cytoplasmic side of the membrane. Residues 267-288 (MVVAVVALFVLCWMPFYLLNIV) form a helical membrane-spanning segment. Over 289–302 (NVVCPLPEEPAFFG) the chain is Extracellular. The chain crosses the membrane as a helical span at residues 303–325 (LYFLVVALPYANSCANPILYGFL). Residues 326–428 (SYRFKQGFRR…GDKASTLSHL (103 aa)) lie on the Cytoplasmic side of the membrane. Residues Ser-341, Ser-346, and Ser-351 each carry the phosphoserine modification. Residues 343–428 (RVRSQEPGSG…GDKASTLSHL (86 aa)) form a disordered region. Thr-357 is subject to Phosphothreonine. Residues 357–370 (TEEEEDEEEEERRE) are compositionally biased toward acidic residues. The segment covering 385-412 (RLSQIAQPGPSGQQQRPCTGTAKEQQLL) has biased composition (polar residues).

This sequence belongs to the G-protein coupled receptor 1 family. Homodimer and heterodimer with SSTR2. Heterodimerization with SSTR2 inactivates SSTR3 receptor function. Post-translationally, phosphorylated. Phosphorylation increases upon somatostatin binding. Densely expressed in cerebellum and at moderate levels in the amygdala, cortex, striatum, spleen, liver and pituitary.

The protein localises to the cell membrane. Functionally, receptor for somatostatin-14 and -28. This receptor is coupled via pertussis toxin sensitive G proteins to inhibition of adenylyl cyclase. In Rattus norvegicus (Rat), this protein is Somatostatin receptor type 3 (Sstr3).